The chain runs to 557 residues: 2-isopropylmalate synthase (557 aa).

The region spanning 33 to 307 (PIWCSSDLRD…DPQLDFSDID (275 aa)) is the Pyruvate carboxyltransferase domain. Asp-42, His-246, His-248, and Asn-282 together coordinate Mg(2+). The segment at 439-557 (ANAPYALVSH…SLSQQQAKAA (119 aa)) is regulatory domain.

It belongs to the alpha-IPM synthase/homocitrate synthase family. LeuA type 2 subfamily. As to quaternary structure, homodimer. Requires Mg(2+) as cofactor.

Its subcellular location is the cytoplasm. It carries out the reaction 3-methyl-2-oxobutanoate + acetyl-CoA + H2O = (2S)-2-isopropylmalate + CoA + H(+). Its pathway is amino-acid biosynthesis; L-leucine biosynthesis; L-leucine from 3-methyl-2-oxobutanoate: step 1/4. Functionally, catalyzes the condensation of the acetyl group of acetyl-CoA with 3-methyl-2-oxobutanoate (2-ketoisovalerate) to form 3-carboxy-3-hydroxy-4-methylpentanoate (2-isopropylmalate). In Pseudomonas entomophila (strain L48), this protein is 2-isopropylmalate synthase.